Here is a 1380-residue protein sequence, read N- to C-terminus: DNA-directed RNA polymerase subunit beta (1380 aa).

It belongs to the RNA polymerase beta chain family. The RNAP catalytic core consists of 2 alpha, 1 beta, 1 beta' and 1 omega subunit. When a sigma factor is associated with the core the holoenzyme is formed, which can initiate transcription.

The catalysed reaction is RNA(n) + a ribonucleoside 5'-triphosphate = RNA(n+1) + diphosphate. Functionally, DNA-dependent RNA polymerase catalyzes the transcription of DNA into RNA using the four ribonucleoside triphosphates as substrates. This is DNA-directed RNA polymerase subunit beta from Ehrlichia ruminantium (strain Welgevonden).